The chain runs to 140 residues: Protein ApaG (140 aa).

The region spanning 13-137 is the ApaG domain; that stretch reads EARTRDIVVR…FSLHLPGAAM (125 aa).

The chain is Protein ApaG from Caulobacter vibrioides (strain ATCC 19089 / CIP 103742 / CB 15) (Caulobacter crescentus).